The chain runs to 876 residues: GRB2-associated and regulator of MAPK protein (876 aa).

The interval 12-320 (KDVKWSPVAM…HQVKGDMWPE (309 aa)) is CABIT. Tyr-105 bears the Phosphotyrosine mark. The segment at 427–448 (GDSGSDYLFPEANEESAGIPGK) is disordered. Position 453 is a phosphotyrosine (Tyr-453). 2 disordered regions span residues 460 to 501 (EGKP…ATLG) and 530 to 572 (LNAP…SYYS). Positions 498 to 550 (ATLGATIKSSEIALPPPPVPPKSEAVREECRLLNAPPVPPRSAKPLSTSPSIP) are necessary for interaction with GRB2. A compositionally biased stretch (polar residues) spans 560 to 572 (QTRSPSPTLSYYS). Ser-609 and Ser-613 each carry phosphoserine. Polar residues-rich tracts occupy residues 630–639 (SGASENQTRS) and 647–657 (RSYSYPRQKTP). Disordered regions lie at residues 630–664 (SGASENQTRSDFLLDPSRSYSYPRQKTPGTPKRTC) and 722–759 (CPALPPRAPKPVEQKATPETSPLPLKIDGAEEDPTAGS). The 66-residue stretch at 811–876 (LSIEEVSKSL…QFINGWRPKI (66 aa)) folds into the SAM domain.

This sequence belongs to the GAREM family. Interacts with EGFR. Interacts (via proline-rich domain and phosphorylated at Tyr-105 and Tyr-453) with GRB2 (via SH3 domains); the interaction occurs upon EGF stimulation. Interacts (phosphorylated at Tyr-453) with PTPN11; the interaction increases MAPK/ERK activity and does not affect the GRB2/SOS complex formation. On EGF stimulation, phosphorylated on Tyr-105 and Tyr-453.

Functionally, acts as an adapter protein that plays a role in intracellular signaling cascades triggered either by the cell surface activated epidermal growth factor receptor and/or cytoplasmic protein tyrosine kinases. Promotes activation of the MAPK/ERK signaling pathway. Plays a role in the regulation of cell proliferation. This chain is GRB2-associated and regulator of MAPK protein (Garem1), found in Mus musculus (Mouse).